The chain runs to 444 residues: Alpha-(1,3)-fucosyltransferase B (444 aa).

The Cytoplasmic portion of the chain corresponds to 1-6; that stretch reads MRLAQR. Residues 7 to 27 traverse the membrane as a helical; Signal-anchor for type II membrane protein segment; sequence YGIALVALLMVGATVLFFWSE. The Lumenal segment spans residues 28–444; sequence NIINYENIKF…GNNCSNSSNT (417 aa). N279, N437, and N440 each carry an N-linked (GlcNAc...) asparagine glycan.

Belongs to the glycosyltransferase 10 family.

Its subcellular location is the golgi apparatus. The protein resides in the golgi stack membrane. The protein operates within protein modification; protein glycosylation. In Drosophila melanogaster (Fruit fly), this protein is Alpha-(1,3)-fucosyltransferase B (FucTB).